The following is a 268-amino-acid chain: Lipopolysaccharide core heptose(I) kinase WaaP (268 aa).

3 positions are modified to phosphotyrosine; by autocatalysis: tyrosine 30, tyrosine 48, and tyrosine 98. Residue aspartate 163 is part of the active site. A phosphotyrosine; by autocatalysis mark is found at tyrosine 165, tyrosine 211, tyrosine 231, tyrosine 258, and tyrosine 264.

Belongs to the protein kinase superfamily. KdkA/RfaP family. Interacts with acyl-AcpP. The WaaP hydrophobic channel can accommodate acyl chains of different lengths, but myristyl-ACP is likely its physiological binding partner. Mg(2+) serves as cofactor.

The protein localises to the cytoplasm. It carries out the reaction an L-alpha-D-Hep-(1-&gt;3)-L-alpha-D-Hep-(1-&gt;5)-[alpha-Kdo-(2-&gt;4)]-alpha-Kdo-(2-&gt;6)-lipid A + ATP = an L-alpha-D-Hep-(1-&gt;3)-4-O-phospho-L-alpha-D-Hep-(1-&gt;5)-[alpha-Kdo-(2-&gt;4)]-alpha-Kdo-(2-&gt;6)-lipid A + ADP + H(+). The enzyme catalyses L-tyrosyl-[protein] + ATP = O-phospho-L-tyrosyl-[protein] + ADP + H(+). It participates in bacterial outer membrane biogenesis; LPS core biosynthesis. Acylated-acyl carrier protein (acyl-ACP) acts as a very tightly bound cofactor necessary for the production and stability of active WaaP kinase. Its function is as follows. Kinase involved in the biosynthesis of the core oligosaccharide region of lipopolysaccharide (LPS). Catalyzes the phosphorylation of heptose I (HepI), the first heptose added to the Kdo2-lipid A module. Also has protein-tyrosine kinase activity: autophosphorylates on all Tyr residues; in vitro can phosphorylate poly(Glu,Tyr). This is Lipopolysaccharide core heptose(I) kinase WaaP from Pseudomonas aeruginosa (strain ATCC 15692 / DSM 22644 / CIP 104116 / JCM 14847 / LMG 12228 / 1C / PRS 101 / PAO1).